The primary structure comprises 544 residues: Chaperonin GroEL 1 (544 aa).

Residues 30–33, K51, 87–91, G415, 481–483, and D497 each bind ATP; these read TLGP, DGTTT, and DAL.

This sequence belongs to the chaperonin (HSP60) family. Forms a cylinder of 14 subunits composed of two heptameric rings stacked back-to-back. Interacts with the co-chaperonin GroES.

It localises to the cytoplasm. It catalyses the reaction ATP + H2O + a folded polypeptide = ADP + phosphate + an unfolded polypeptide.. In terms of biological role, together with its co-chaperonin GroES, plays an essential role in assisting protein folding. The GroEL-GroES system forms a nano-cage that allows encapsulation of the non-native substrate proteins and provides a physical environment optimized to promote and accelerate protein folding. This chain is Chaperonin GroEL 1, found in Chlamydia caviae (strain ATCC VR-813 / DSM 19441 / 03DC25 / GPIC) (Chlamydophila caviae).